The primary structure comprises 508 residues: Maturase K (508 aa).

It belongs to the intron maturase 2 family. MatK subfamily.

The protein resides in the plastid. It is found in the chloroplast. Functionally, usually encoded in the trnK tRNA gene intron. Probably assists in splicing its own and other chloroplast group II introns. This chain is Maturase K, found in Collinsia heterophylla (Purple Chinese houses).